The sequence spans 366 residues: Ribosomal RNA large subunit methyltransferase M (366 aa).

S-adenosyl-L-methionine-binding positions include Ser-188, 221-224 (CPGG), Asp-240, Asp-260, and Asp-277. Lys-306 functions as the Proton acceptor in the catalytic mechanism.

Belongs to the class I-like SAM-binding methyltransferase superfamily. RNA methyltransferase RlmE family. RlmM subfamily. Monomer.

It is found in the cytoplasm. It carries out the reaction cytidine(2498) in 23S rRNA + S-adenosyl-L-methionine = 2'-O-methylcytidine(2498) in 23S rRNA + S-adenosyl-L-homocysteine + H(+). Its function is as follows. Catalyzes the 2'-O-methylation at nucleotide C2498 in 23S rRNA. The protein is Ribosomal RNA large subunit methyltransferase M of Escherichia fergusonii (strain ATCC 35469 / DSM 13698 / CCUG 18766 / IAM 14443 / JCM 21226 / LMG 7866 / NBRC 102419 / NCTC 12128 / CDC 0568-73).